The chain runs to 162 residues: Toluate 1,2-dioxygenase subunit beta (162 aa).

It belongs to the bacterial ring-hydroxylating dioxygenase beta subunit family. This dioxygenase system consists of three proteins: the two subunits of the hydroxylase component (XylX and XylY), and an electron transfer component (XylZ).

Its pathway is xenobiotic degradation; toluene degradation. The chain is Toluate 1,2-dioxygenase subunit beta (xylY) from Pseudomonas putida (Arthrobacter siderocapsulatus).